Here is a 408-residue protein sequence, read N- to C-terminus: Succinylornithine transaminase (408 aa).

Lys-252 carries the post-translational modification N6-(pyridoxal phosphate)lysine.

The protein belongs to the class-III pyridoxal-phosphate-dependent aminotransferase family. AstC subfamily. Pyridoxal 5'-phosphate is required as a cofactor.

It catalyses the reaction N(2)-succinyl-L-ornithine + 2-oxoglutarate = N-succinyl-L-glutamate 5-semialdehyde + L-glutamate. It functions in the pathway amino-acid degradation; L-arginine degradation via AST pathway; L-glutamate and succinate from L-arginine: step 3/5. In terms of biological role, catalyzes the transamination of N(2)-succinylornithine and alpha-ketoglutarate into N(2)-succinylglutamate semialdehyde and glutamate. Can also act as an acetylornithine aminotransferase. This chain is Succinylornithine transaminase, found in Salmonella typhimurium (strain LT2 / SGSC1412 / ATCC 700720).